The chain runs to 1147 residues: Putative ATP-dependent RNA helicase L377 (1147 aa).

In terms of domain architecture, Helicase ATP-binding spans 108–315 (INPNTPYRGL…VELINYLRPK (208 aa)). Residue 121 to 128 (WGTGVGKS) participates in ATP binding. The DEAH box signature appears at 264 to 267 (DEAH).

The protein belongs to the DEAD box helicase family. DEAH subfamily.

It localises to the virion. The enzyme catalyses ATP + H2O = ADP + phosphate + H(+). This is Putative ATP-dependent RNA helicase L377 from Acanthamoeba polyphaga (Amoeba).